Reading from the N-terminus, the 366-residue chain is tRNA pseudouridine synthase B (366 aa).

The Nucleophile role is filled by Asp-44.

It belongs to the pseudouridine synthase TruB family. Type 1 subfamily.

The enzyme catalyses uridine(55) in tRNA = pseudouridine(55) in tRNA. Functionally, responsible for synthesis of pseudouridine from uracil-55 in the psi GC loop of transfer RNAs. The chain is tRNA pseudouridine synthase B from Treponema pallidum (strain Nichols).